The chain runs to 356 residues: S-adenosylmethionine:tRNA ribosyltransferase-isomerase (356 aa).

It belongs to the QueA family. In terms of assembly, monomer.

It localises to the cytoplasm. The catalysed reaction is 7-aminomethyl-7-carbaguanosine(34) in tRNA + S-adenosyl-L-methionine = epoxyqueuosine(34) in tRNA + adenine + L-methionine + 2 H(+). It participates in tRNA modification; tRNA-queuosine biosynthesis. Functionally, transfers and isomerizes the ribose moiety from AdoMet to the 7-aminomethyl group of 7-deazaguanine (preQ1-tRNA) to give epoxyqueuosine (oQ-tRNA). This is S-adenosylmethionine:tRNA ribosyltransferase-isomerase from Citrobacter koseri (strain ATCC BAA-895 / CDC 4225-83 / SGSC4696).